Here is a 508-residue protein sequence, read N- to C-terminus: Protein DETOXIFICATION 52 (508 aa).

The next 12 helical transmembrane spans lie at 48-68 (ILAA…LGHI), 78-98 (LAIA…ALGM), 122-142 (VLFL…LGKI), 156-176 (AQTY…LHPL), 189-209 (LTLA…FLVS), 222-242 (AAAS…IAGL), 270-290 (IGVC…GLLI), 300-320 (GILI…GLAV), 341-361 (IVAV…AWGV), 368-388 (IFTN…ILGL), 415-437 (INLG…WAAY), and 441-463 (GLWV…VVAT).

It belongs to the multi antimicrobial extrusion (MATE) (TC 2.A.66.1) family. As to expression, detected in the part of the veins in cotyledons of 6-day-old seedlings and the basal parts of the petioles in older plants. Highly expressed in the vascular tissues of hypocotyl in dark-grown seedlings.

It localises to the late endosome membrane. Its function is as follows. May act as a negative regulator of hypocotyl cell elongation in the light. This is Protein DETOXIFICATION 52 from Arabidopsis thaliana (Mouse-ear cress).